The primary structure comprises 234 residues: Ribonuclease Trv (234 aa).

Disulfide bonds link Cys-5-Cys-24, Cys-13-Cys-59, Cys-23-Cys-125, Cys-67-Cys-117, and Cys-189-Cys-224. N-linked (GlcNAc...) asparagine glycosylation occurs at Asn-15. The active site involves His-52. A glycan (N-linked (GlcNAc...) asparagine) is linked at Asn-75. Catalysis depends on residues Glu-110 and His-114.

The protein belongs to the RNase T2 family.

The catalysed reaction is a ribonucleotidyl-ribonucleotide-RNA + H2O = a 3'-end 3'-phospho-ribonucleotide-RNA + a 5'-end dephospho-ribonucleoside-RNA + H(+). This is a base non-specific and adenylic acid preferential ribonuclease. This chain is Ribonuclease Trv, found in Hypocrea rufa (Trichoderma viride).